A 343-amino-acid chain; its full sequence is Phosphoribosylformylglycinamidine cyclo-ligase (343 aa).

The protein belongs to the AIR synthase family.

The protein resides in the cytoplasm. It catalyses the reaction 2-formamido-N(1)-(5-O-phospho-beta-D-ribosyl)acetamidine + ATP = 5-amino-1-(5-phospho-beta-D-ribosyl)imidazole + ADP + phosphate + H(+). It participates in purine metabolism; IMP biosynthesis via de novo pathway; 5-amino-1-(5-phospho-D-ribosyl)imidazole from N(2)-formyl-N(1)-(5-phospho-D-ribosyl)glycinamide: step 2/2. This chain is Phosphoribosylformylglycinamidine cyclo-ligase, found in Staphylococcus epidermidis (strain ATCC 35984 / DSM 28319 / BCRC 17069 / CCUG 31568 / BM 3577 / RP62A).